Consider the following 314-residue polypeptide: MPLGLRGKKKAAKSKEAARLVEGERSSGSQGVPGPPAPARKLVFHAQLAHGSATGRVEDFSSISELYAKIAGVFEIAPSEILFCTLNTPKIDMGKLLGGQLGLEDFIFAHVKGTKKEVNVYKSEDSLGLTITDNGVGYAFIKRIKDGSTIDSVKTICVGDHIECINGENIVGWRHFEVAKKLKELKKEELFTLQLIEPKKAFEIGPRSKAGKTSTEKIGTSRGTLRLRSKGPATVEELPSEAKAKAIGKVDDLLELYMGIRDIDLATTMFEAGKDKSNPDEFAVALDETLGDFAFPDEFLFDVWGAISDMKQGR.

A compositionally biased stretch (basic residues) spans 1 to 12; the sequence is MPLGLRGKKKAA. Positions 1 to 36 are disordered; sequence MPLGLRGKKKAAKSKEAARLVEGERSSGSQGVPGPP. Over residues 13–25 the composition is skewed to basic and acidic residues; that stretch reads KSKEAARLVEGER. One can recognise a PDZ domain in the interval 117–197; sequence EVNVYKSEDS…EELFTLQLIE (81 aa).

This sequence belongs to the GIPC family. Probably interacts with SEMA5A. Expressed in kidney and lung (at protein level).

Its subcellular location is the cytoplasm. In Mus musculus (Mouse), this protein is PDZ domain-containing protein GIPC2 (Gipc2).